The following is a 550-amino-acid chain: Flagellin (550 aa).

Belongs to the bacterial flagellin family.

The protein localises to the secreted. It localises to the bacterial flagellum. In terms of biological role, flagellin is the subunit protein which polymerizes to form the filaments of bacterial flagella. In Shigella flexneri, this protein is Flagellin (fliC).